The sequence spans 198 residues: Holliday junction branch migration complex subunit RuvA (198 aa).

The domain I stretch occupies residues 1–61 (MTLYKIGEIV…DYIQQTYGFK (61 aa)). Positions 62–139 (TFKERLLFTD…KIIQNKEVKK (78 aa)) are domain II. Positions 140–144 (FDDIT) are flexible linker. Residues 144–198 (TNIKELKQTLNKLGFKASDIDYAVNNISSTKELDLMVEESINLITTQMHANNQTT) form a domain III region.

The protein belongs to the RuvA family. In terms of assembly, homotetramer. Forms an RuvA(8)-RuvB(12)-Holliday junction (HJ) complex. HJ DNA is sandwiched between 2 RuvA tetramers; dsDNA enters through RuvA and exits via RuvB. An RuvB hexamer assembles on each DNA strand where it exits the tetramer. Each RuvB hexamer is contacted by two RuvA subunits (via domain III) on 2 adjacent RuvB subunits; this complex drives branch migration. In the full resolvosome a probable DNA-RuvA(4)-RuvB(12)-RuvC(2) complex forms which resolves the HJ.

The protein localises to the cytoplasm. Functionally, the RuvA-RuvB-RuvC complex processes Holliday junction (HJ) DNA during genetic recombination and DNA repair, while the RuvA-RuvB complex plays an important role in the rescue of blocked DNA replication forks via replication fork reversal (RFR). RuvA specifically binds to HJ cruciform DNA, conferring on it an open structure. The RuvB hexamer acts as an ATP-dependent pump, pulling dsDNA into and through the RuvAB complex. HJ branch migration allows RuvC to scan DNA until it finds its consensus sequence, where it cleaves and resolves the cruciform DNA. The polypeptide is Holliday junction branch migration complex subunit RuvA (Mycoplasmopsis synoviae (strain 53) (Mycoplasma synoviae)).